The following is a 71-amino-acid chain: Disintegrin halysin (71 aa).

Residues 1–71 (EAGEECDCGS…ISAGCPRNPF (71 aa)) form the Disintegrin domain. 6 disulfide bridges follow: C6-C21, C8-C16, C15-C38, C29-C35, C34-C59, and C47-C66. Positions 51-53 (RGD) match the Cell attachment site motif.

Belongs to the venom metalloproteinase (M12B) family. P-II subfamily. P-IIa sub-subfamily. In terms of assembly, monomer. In terms of tissue distribution, expressed by the venom gland.

It localises to the secreted. Functionally, inhibits fibrinogen interaction with platelets. Acts by binding to alpha-IIb/beta-3 (ITGA2B/ITGB3) on the platelet surface and inhibits aggregation induced by ADP, thrombin, platelet-activating factor and collagen. The polypeptide is Disintegrin halysin (Gloydius blomhoffii (Mamushi)).